Here is a 465-residue protein sequence, read N- to C-terminus: Soluble pyridine nucleotide transhydrogenase (465 aa).

36-45 contributes to the FAD binding site; that stretch reads ERYNNVGGGC.

The protein belongs to the class-I pyridine nucleotide-disulfide oxidoreductase family. FAD serves as cofactor.

The protein localises to the cytoplasm. It carries out the reaction NAD(+) + NADPH = NADH + NADP(+). Conversion of NADPH, generated by peripheral catabolic pathways, to NADH, which can enter the respiratory chain for energy generation. The chain is Soluble pyridine nucleotide transhydrogenase from Serratia proteamaculans (strain 568).